Reading from the N-terminus, the 202-residue chain is Probable WRKY transcription factor 59 (202 aa).

A DNA-binding region (WRKY) is located at residues 103–168 (DEKVALDDGY…YEGRHNHPSP (66 aa)).

This sequence belongs to the WRKY group II-c family.

It localises to the nucleus. Functionally, transcription factor. Interacts specifically with the W box (5'-(T)TGAC[CT]-3'), a frequently occurring elicitor-responsive cis-acting element. This chain is Probable WRKY transcription factor 59 (WRKY59), found in Arabidopsis thaliana (Mouse-ear cress).